Consider the following 188-residue polypeptide: Ribosome-recycling factor (188 aa).

It belongs to the RRF family.

The protein localises to the cytoplasm. In terms of biological role, responsible for the release of ribosomes from messenger RNA at the termination of protein biosynthesis. May increase the efficiency of translation by recycling ribosomes from one round of translation to another. This Cereibacter sphaeroides (strain ATCC 17025 / ATH 2.4.3) (Rhodobacter sphaeroides) protein is Ribosome-recycling factor.